Consider the following 734-residue polypeptide: MALRFPRFSQGLAQDPTTRRIWFGIATAHDFESHDDITEERLYQNIFASHFGQLAIIFLWTSGNLFHVAWQGNFESWIQDPLHVRPIAHAIWDPHFGQPAVEAFTRGGAIGPVNIAYSGVYQWWYTIGLRTNEDLYTGALFLLCLSAISLIAGWLHLQPKWKPSLSWFKNAESRLNHHLSGLFGVSSLAWAGHLVHVAIPGSRGEYVRWNNFLNVLPHPQGLEPLLTGQWNLYAQNSDSSSHLFGTSKGAGTAILTLLGGFHPQTQSLWLTDIAHHHLAIAFLFLVAGHMYRTNFGIGHSIKDLLEAHIPPGGRLGRGHKGLYDTINNSIHFQLGLALASLGVITSLVAQHMYSLPAYAFIAQDFTTQAALYTHHQYIAGFIMTGAFAHGAIFFIRDYNPEQNEDNVLARMLDHKEAIISHLSWASLFLGFHTLGLYVHNDVMLAFGTPEKQILIEPIFAQWIQSAHGKTSYGFDVLLSSTNGPAFNAGRSIWLPGWLNAINENSNSLFLTIGPGDFLVHHAIALGLHTTTLILVKGALDARGSKLMPDKKDFGYSFPCDGPGRGGTCDISAWDAFYLAVFWMLNTIGWVTFYWHWKHITLWQGNVSQFNESSTYLMGWLRDYLWLNSSQLINGYNPFGMNSLSVWAWMFLFGHLVWATGFMFLISWRGYWQELIETLAWAHERTPLANLIRWRDKPVALSIVQARLVGLAHFSVGYIFTYAAFLIASTSGKFG.

8 helical membrane passes run 46-69 (IFASHFGQLAIIFLWTSGNLFHVA), 135-158 (LYTGALFLLCLSAISLIAGWLHLQ), 175-199 (LNHHLSGLFGVSSLAWAGHLVHVAI), 273-291 (IAHHHLAIAFLFLVAGHMY), 330-353 (IHFQLGLALASLGVITSLVAQHMY), 369-395 (AALYTHHQYIAGFIMTGAFAHGAIFFI), 417-439 (AIISHLSWASLFLGFHTLGLYVH), and 517-535 (FLVHHAIALGLHTTTLILV). [4Fe-4S] cluster-binding residues include Cys-559 and Cys-568. A run of 2 helical transmembrane segments spans residues 575–596 (AFYLAVFWMLNTIGWVTFYWHW) and 643–665 (LSVWAWMFLFGHLVWATGFMFLI). 3 residues coordinate chlorophyll a: His-654, Met-662, and Tyr-670. Trp-671 contacts phylloquinone. A helical transmembrane segment spans residues 707–727 (LVGLAHFSVGYIFTYAAFLIA).

The protein belongs to the PsaA/PsaB family. As to quaternary structure, the PsaA/B heterodimer binds the P700 chlorophyll special pair and subsequent electron acceptors. PSI consists of a core antenna complex that captures photons, and an electron transfer chain that converts photonic excitation into a charge separation. The eukaryotic PSI reaction center is composed of at least 11 subunits. P700 is a chlorophyll a/chlorophyll a' dimer, A0 is one or more chlorophyll a, A1 is one or both phylloquinones and FX is a shared 4Fe-4S iron-sulfur center. is required as a cofactor.

The protein resides in the plastid. The protein localises to the chloroplast thylakoid membrane. The enzyme catalyses reduced [plastocyanin] + hnu + oxidized [2Fe-2S]-[ferredoxin] = oxidized [plastocyanin] + reduced [2Fe-2S]-[ferredoxin]. Functionally, psaA and PsaB bind P700, the primary electron donor of photosystem I (PSI), as well as the electron acceptors A0, A1 and FX. PSI is a plastocyanin-ferredoxin oxidoreductase, converting photonic excitation into a charge separation, which transfers an electron from the donor P700 chlorophyll pair to the spectroscopically characterized acceptors A0, A1, FX, FA and FB in turn. Oxidized P700 is reduced on the lumenal side of the thylakoid membrane by plastocyanin. This chain is Photosystem I P700 chlorophyll a apoprotein A2, found in Dioscorea elephantipes (Elephant's foot yam).